Reading from the N-terminus, the 140-residue chain is 3-hydroxyacyl-[acyl-carrier-protein] dehydratase FabZ (140 aa).

H48 is a catalytic residue.

This sequence belongs to the thioester dehydratase family. FabZ subfamily.

Its subcellular location is the cytoplasm. The catalysed reaction is a (3R)-hydroxyacyl-[ACP] = a (2E)-enoyl-[ACP] + H2O. In terms of biological role, involved in unsaturated fatty acids biosynthesis. Catalyzes the dehydration of short chain beta-hydroxyacyl-ACPs and long chain saturated and unsaturated beta-hydroxyacyl-ACPs. The protein is 3-hydroxyacyl-[acyl-carrier-protein] dehydratase FabZ of Latilactobacillus sakei subsp. sakei (strain 23K) (Lactobacillus sakei subsp. sakei).